Here is a 220-residue protein sequence, read N- to C-terminus: Translation initiation factor 6 (220 aa).

It belongs to the eIF-6 family.

Binds to the 50S ribosomal subunit and prevents its association with the 30S ribosomal subunit to form the 70S initiation complex. The polypeptide is Translation initiation factor 6 (Halobacterium salinarum (strain ATCC 29341 / DSM 671 / R1)).